Reading from the N-terminus, the 498-residue chain is Lysine--tRNA ligase (498 aa).

Mg(2+) contacts are provided by Glu409 and Glu416.

The protein belongs to the class-II aminoacyl-tRNA synthetase family. As to quaternary structure, homodimer. Mg(2+) serves as cofactor.

It localises to the cytoplasm. It carries out the reaction tRNA(Lys) + L-lysine + ATP = L-lysyl-tRNA(Lys) + AMP + diphosphate. The protein is Lysine--tRNA ligase of Coxiella burnetii (strain CbuK_Q154) (Coxiella burnetii (strain Q154)).